The sequence spans 1637 residues: Serine/threonine-protein kinase Genghis Khan (1637 aa).

The Protein kinase domain maps to 100–369 (FDILKIIGRG…IQDFMDHPWF (270 aa)). Residues 106–114 (IGRGAFGEV) and Lys-129 each bind ATP. The active-site Proton acceptor is the Asp-224. In terms of domain architecture, AGC-kinase C-terminal spans 370-440 (VGIDWKNIRQ…SLTSSSTLDS (71 aa)). Coiled coils occupy residues 473–587 (VDSV…EDAV), 643–688 (SEKL…LKYT), and 839–881 (DELS…DLQK). Residues 538–575 (RNQKQKLSRQVRDKEEELDGAMQKNDSLRNELRKSDKT) form a disordered region. Positions 563 to 575 (DSLRNELRKSDKT) are enriched in basic and acidic residues. Thr-895 carries the phosphothreonine modification. The segment at 952–971 (NNKDHSSMKEASVSDLSREE) is disordered. The Phorbol-ester/DAG-type zinc finger occupies 989–1039 (IHQFLVRTFSSPTKCNHCTSLMVGLTRQGVVCEICGFACHTICCQKVPTTC). Positions 1059 to 1177 (GTAYEGYVKV…WVIALGELHR (119 aa)) constitute a PH domain. The 287-residue stretch at 1203-1489 (IRNALCSVII…LPLNNLGNVV (287 aa)) folds into the CNH domain. Positions 1546-1559 (ISAPTNFNHISHMG) constitute a CRIB domain. Residue Ser-1584 is modified to Phosphoserine. Residues 1611 to 1637 (DYGNDNIISRTPSPMASSFMDGLSNND) form a disordered region. Positions 1616–1626 (NIISRTPSPMA) are enriched in polar residues.

Belongs to the protein kinase superfamily. AGC Ser/Thr protein kinase family. DMPK subfamily. In terms of assembly, interacts tightly with GTP-bound but not GDP-bound Cdc42.

It carries out the reaction L-seryl-[protein] + ATP = O-phospho-L-seryl-[protein] + ADP + H(+). The catalysed reaction is L-threonyl-[protein] + ATP = O-phospho-L-threonyl-[protein] + ADP + H(+). Acts as a downstream effector for the regulation of actin polymerization by Cdc42. The polypeptide is Serine/threonine-protein kinase Genghis Khan (gek) (Drosophila melanogaster (Fruit fly)).